The following is a 212-amino-acid chain: Neuroendocrine protein 7B2 (212 aa).

The first 26 residues, methionine 1–alanine 26, serve as a signal peptide directing secretion. A disulfide bridge connects residues cysteine 120 and cysteine 130. Residues serine 141 and serine 205 each carry the phosphoserine modification. A disordered region spans residues glycine 174–glutamate 212.

The protein belongs to the 7B2 family. As to quaternary structure, interacts with PCSK2/PC2 early in the secretory pathway. Dissociation occurs at later stages. Proteolytically cleaved in the Golgi by a furin-like convertase to generate bioactive peptides. In terms of processing, sulfated on tyrosine residues.

The protein localises to the secreted. Functionally, acts as a molecular chaperone for PCSK2/PC2, preventing its premature activation in the regulated secretory pathway. Binds to inactive PCSK2 in the endoplasmic reticulum and facilitates its transport from there to later compartments of the secretory pathway where it is proteolytically matured and activated. Also required for cleavage of PCSK2 but does not appear to be involved in its folding. Plays a role in regulating pituitary hormone secretion. The C-terminal peptide inhibits PCSK2 in vitro. The protein is Neuroendocrine protein 7B2 (SCG5) of Homo sapiens (Human).